Here is a 326-residue protein sequence, read N- to C-terminus: Glycerol-3-phosphate dehydrogenase [NAD(P)+] (326 aa).

W15, R35, and K107 together coordinate NADPH. Sn-glycerol 3-phosphate contacts are provided by K107, G135, and S137. A139 lines the NADPH pocket. 5 residues coordinate sn-glycerol 3-phosphate: K190, D243, S253, R254, and N255. The Proton acceptor role is filled by K190. R254 is a binding site for NADPH. NADPH is bound by residues L273 and E275.

Belongs to the NAD-dependent glycerol-3-phosphate dehydrogenase family.

The protein resides in the cytoplasm. It carries out the reaction sn-glycerol 3-phosphate + NAD(+) = dihydroxyacetone phosphate + NADH + H(+). The catalysed reaction is sn-glycerol 3-phosphate + NADP(+) = dihydroxyacetone phosphate + NADPH + H(+). It functions in the pathway membrane lipid metabolism; glycerophospholipid metabolism. Catalyzes the reduction of the glycolytic intermediate dihydroxyacetone phosphate (DHAP) to sn-glycerol 3-phosphate (G3P), the key precursor for phospholipid synthesis. The sequence is that of Glycerol-3-phosphate dehydrogenase [NAD(P)+] from Bradyrhizobium diazoefficiens (strain JCM 10833 / BCRC 13528 / IAM 13628 / NBRC 14792 / USDA 110).